A 184-amino-acid chain; its full sequence is Large ribosomal subunit protein uL5 (184 aa).

Belongs to the universal ribosomal protein uL5 family. In terms of assembly, part of the 50S ribosomal subunit; part of the 5S rRNA/L5/L18/L25 subcomplex. Contacts the 5S rRNA and the P site tRNA. Forms a bridge to the 30S subunit in the 70S ribosome.

This is one of the proteins that bind and probably mediate the attachment of the 5S RNA into the large ribosomal subunit, where it forms part of the central protuberance. In the 70S ribosome it contacts protein S13 of the 30S subunit (bridge B1b), connecting the 2 subunits; this bridge is implicated in subunit movement. Contacts the P site tRNA; the 5S rRNA and some of its associated proteins might help stabilize positioning of ribosome-bound tRNAs. The protein is Large ribosomal subunit protein uL5 of Thermotoga maritima (strain ATCC 43589 / DSM 3109 / JCM 10099 / NBRC 100826 / MSB8).